The following is a 256-amino-acid chain: MRILLSNDDGVHSPGLVALYEGLKGLGELKVVAPDRDHSGASNALTLNRPLTVEQHPNGFRSVDGTPTDCVHLAVNGLFDTAFDRVVSGINTHANLGDDIIYSGTVAAATEGRHLGLPAIAVSLVNNGHFHYDTAARVVRLLLEYKQALKLGPRSILNVNVPDLPWERLSGFRVTRLGHRERAEGAVPMTCPRGKQRYWIGAAGQGGDAGPGTDFHAVREGYVSITPVHIDMTRHEALSGLREWVDGMDESTGGQP.

A divalent metal cation contacts are provided by Asp-8, Asp-9, Ser-39, and Asn-91.

It belongs to the SurE nucleotidase family. A divalent metal cation is required as a cofactor.

It is found in the cytoplasm. It catalyses the reaction a ribonucleoside 5'-phosphate + H2O = a ribonucleoside + phosphate. In terms of biological role, nucleotidase that shows phosphatase activity on nucleoside 5'-monophosphates. This Marinobacter nauticus (strain ATCC 700491 / DSM 11845 / VT8) (Marinobacter aquaeolei) protein is 5'-nucleotidase SurE.